Here is a 90-residue protein sequence, read N- to C-terminus: CRISPR-associated endonuclease Cas2 2 (90 aa).

Aspartate 11 serves as a coordination point for Mg(2+).

This sequence belongs to the CRISPR-associated endoribonuclease Cas2 protein family. Homodimer, forms a heterotetramer with a Cas1 homodimer. The cofactor is Mn(2+). Requires Mg(2+) as cofactor.

With respect to regulation, inhibited by EDTA and at pH 6.0. In terms of biological role, CRISPR (clustered regularly interspaced short palindromic repeat), is an adaptive immune system that provides protection against mobile genetic elements (viruses, transposable elements and conjugative plasmids). CRISPR clusters contain sequences complementary to antecedent mobile elements and target invading nucleic acids. CRISPR clusters are transcribed and processed into CRISPR RNA (crRNA). Involved in the integration of spacer DNA into the CRISPR cassette. Functions as a dsDNA endonuclease and as a weak ssRNase. This Thermus thermophilus (strain ATCC BAA-163 / DSM 7039 / HB27) protein is CRISPR-associated endonuclease Cas2 2 (cas2b).